Consider the following 200-residue polypeptide: 3-isopropylmalate dehydratase small subunit (200 aa).

The protein belongs to the LeuD family. LeuD type 1 subfamily. As to quaternary structure, heterodimer of LeuC and LeuD.

The enzyme catalyses (2R,3S)-3-isopropylmalate = (2S)-2-isopropylmalate. Its pathway is amino-acid biosynthesis; L-leucine biosynthesis; L-leucine from 3-methyl-2-oxobutanoate: step 2/4. In terms of biological role, catalyzes the isomerization between 2-isopropylmalate and 3-isopropylmalate, via the formation of 2-isopropylmaleate. In Serratia proteamaculans (strain 568), this protein is 3-isopropylmalate dehydratase small subunit.